The following is a 150-amino-acid chain: Catabolic 3-dehydroquinase 2 (150 aa).

The active-site Proton acceptor is the Tyr-23. Residues Asn-74, His-80, and Asp-87 each coordinate substrate. The active-site Proton donor is the His-100. Substrate contacts are provided by residues Ile-101–Thr-102 and Arg-111.

The protein belongs to the type-II 3-dehydroquinase family. In terms of assembly, homododecamer. Adopts a ring-like structure, composed of an arrangement of two hexameric rings stacked on top of one another.

The enzyme catalyses 3-dehydroquinate = 3-dehydroshikimate + H2O. The protein operates within aromatic compound metabolism; 3,4-dihydroxybenzoate biosynthesis; 3,4-dihydroxybenzoate from 3-dehydroquinate: step 1/2. Its function is as follows. Is involved in the catabolism of quinate. Allows the utilization of quinate as carbon source via the beta-ketoadipate pathway. In Aspergillus fumigatus (strain ATCC MYA-4609 / CBS 101355 / FGSC A1100 / Af293) (Neosartorya fumigata), this protein is Catabolic 3-dehydroquinase 2.